The primary structure comprises 119 residues: Large ribosomal subunit protein bL17 (119 aa).

Belongs to the bacterial ribosomal protein bL17 family. Part of the 50S ribosomal subunit. Contacts protein L32.

The protein is Large ribosomal subunit protein bL17 of Mycoplasma mycoides subsp. mycoides SC (strain CCUG 32753 / NCTC 10114 / PG1).